Consider the following 418-residue polypeptide: BTB and MATH domain-containing protein 41 (418 aa).

The interval 1-33 is disordered; that stretch reads MEINNGAQPENAAVSIPSRSPSGKSEKRKSPSI. An MATH domain is found at 45-173; that stretch reads SFTNYWSVER…NDILTIGCEL (129 aa). One can recognise a BTB domain in the interval 232 to 293; the sequence is SDFIIVASCG…TLDVLLRHMY (62 aa).

In terms of assembly, interacts with cul-3.

The protein operates within protein modification; protein ubiquitination. Functionally, probable substrate-specific adapter of an E3 ubiquitin-protein ligase complex which mediates the ubiquitination and subsequent proteasomal degradation of target proteins. The protein is BTB and MATH domain-containing protein 41 (bath-41) of Caenorhabditis elegans.